Here is a 359-residue protein sequence, read N- to C-terminus: Acyl-CoA desaturase (359 aa).

Over Met-1–Val-72 the chain is Cytoplasmic. A helical membrane pass occupies residues Trp-73–Ile-93. Asn-75 is a binding site for substrate. Residues Pro-94 to Lys-97 are Lumenal-facing. Residues Ile-98 to Gly-118 form a helical membrane-spanning segment. Topologically, residues Val-119–Tyr-217 are cytoplasmic. Residues His-120 and His-125 each coordinate Fe cation. The Histidine box-1 signature appears at His-120–His-125. Asn-148, Arg-155, and Asp-156 together coordinate substrate. Fe cation is bound by residues His-157, His-160, and His-161. The Histidine box-2 motif lies at His-157–His-161. Residues Arg-188 and Lys-189 each coordinate substrate. Position 203 is a phosphoserine (Ser-203). The chain crosses the membrane as a helical span at residues Tyr-218–Leu-237. Over Trp-238–Ser-241 the chain is Lumenal. Residues Phe-242 to Leu-263 form a helical membrane-spanning segment. A substrate-binding site is contributed by Trp-262. The Cytoplasmic portion of the chain corresponds to Val-264 to Gly-359. Residues His-269, His-298, His-301, and His-302 each contribute to the Fe cation site. The short motif at His-298–His-302 is the Histidine box-3 element.

The protein belongs to the fatty acid desaturase type 1 family. Requires Fe(2+) as cofactor.

Its subcellular location is the endoplasmic reticulum membrane. The catalysed reaction is octadecanoyl-CoA + 2 Fe(II)-[cytochrome b5] + O2 + 2 H(+) = (9Z)-octadecenoyl-CoA + 2 Fe(III)-[cytochrome b5] + 2 H2O. Stearoyl-CoA desaturase that utilizes O(2) and electrons from reduced cytochrome b5 to introduce the first double bond into saturated fatty acyl-CoA substrates. Catalyzes the insertion of a cis double bond at the delta-9 position into fatty acyl-CoA substrates including palmitoyl-CoA and stearoyl-CoA. Gives rise to a mixture of 16:1 and 18:1 unsaturated fatty acids. Plays an important role in lipid biosynthesis. Plays an important role in regulating the expression of genes that are involved in lipogenesis and in regulating mitochondrial fatty acid oxidation. Plays an important role in body energy homeostasis. Contributes to the biosynthesis of membrane phospholipids, cholesterol esters and triglycerides. The chain is Acyl-CoA desaturase (SCD) from Ovis aries (Sheep).